Reading from the N-terminus, the 242-residue chain is Glucosamine-6-phosphate deaminase (242 aa).

The Proton acceptor; for enolization step role is filled by Asp67. The active-site For ring-opening step is Asn136. His138 functions as the Proton acceptor; for ring-opening step in the catalytic mechanism. The active-site For ring-opening step is Glu143.

The protein belongs to the glucosamine/galactosamine-6-phosphate isomerase family. NagB subfamily.

The catalysed reaction is alpha-D-glucosamine 6-phosphate + H2O = beta-D-fructose 6-phosphate + NH4(+). The protein operates within amino-sugar metabolism; N-acetylneuraminate degradation; D-fructose 6-phosphate from N-acetylneuraminate: step 5/5. Catalyzes the reversible isomerization-deamination of glucosamine 6-phosphate (GlcN6P) to form fructose 6-phosphate (Fru6P) and ammonium ion. In Alkaliphilus metalliredigens (strain QYMF), this protein is Glucosamine-6-phosphate deaminase.